A 63-amino-acid polypeptide reads, in one-letter code: Large ribosomal subunit protein uL29 (63 aa).

Belongs to the universal ribosomal protein uL29 family.

The chain is Large ribosomal subunit protein uL29 from Herminiimonas arsenicoxydans.